Reading from the N-terminus, the 335-residue chain is Dihydroorotate dehydrogenase (quinone) (335 aa).

FMN-binding positions include 59-63 and T83; that span reads AGLDK. K63 serves as a coordination point for substrate. Residue 108 to 112 coordinates substrate; the sequence is NRMGF. Residues N136 and N169 each coordinate FMN. N169 provides a ligand contact to substrate. The active-site Nucleophile is S172. Substrate is bound at residue N174. The FMN site is built by K214 and T242. Substrate is bound at residue 243 to 244; sequence NT. FMN contacts are provided by residues G265, G294, and 315-316; that span reads YS.

Belongs to the dihydroorotate dehydrogenase family. Type 2 subfamily. In terms of assembly, monomer. FMN serves as cofactor.

The protein localises to the cell membrane. The enzyme catalyses (S)-dihydroorotate + a quinone = orotate + a quinol. Its pathway is pyrimidine metabolism; UMP biosynthesis via de novo pathway; orotate from (S)-dihydroorotate (quinone route): step 1/1. Functionally, catalyzes the conversion of dihydroorotate to orotate with quinone as electron acceptor. The protein is Dihydroorotate dehydrogenase (quinone) of Neisseria meningitidis serogroup A / serotype 4A (strain DSM 15465 / Z2491).